A 182-amino-acid polypeptide reads, in one-letter code: MHLIVGLGNPGSQYELTHHNIGFITVDAICKYWGFQLFSKKADYLITSGMINDNKIMLIKPYSFMNNSGIPVAKIRNFYKLSLDNIVVIHDDADLELGRIKVKKGGSSAGHNGLKSIDSFIGNDYWRLRFGVGRPEDQRSLADYVLSKFSNFDNVTPLVEKIAKNIHLMLQGDNTAFINLIV.

Tyrosine 14 provides a ligand contact to tRNA. The active-site Proton acceptor is the histidine 19. The tRNA site is built by phenylalanine 64, asparagine 66, and asparagine 112.

Belongs to the PTH family. In terms of assembly, monomer.

It localises to the cytoplasm. The enzyme catalyses an N-acyl-L-alpha-aminoacyl-tRNA + H2O = an N-acyl-L-amino acid + a tRNA + H(+). In terms of biological role, hydrolyzes ribosome-free peptidyl-tRNAs (with 1 or more amino acids incorporated), which drop off the ribosome during protein synthesis, or as a result of ribosome stalling. Functionally, catalyzes the release of premature peptidyl moieties from peptidyl-tRNA molecules trapped in stalled 50S ribosomal subunits, and thus maintains levels of free tRNAs and 50S ribosomes. The polypeptide is Peptidyl-tRNA hydrolase (Wolbachia sp. subsp. Drosophila simulans (strain wRi)).